The chain runs to 142 residues: UPF0102 protein PsycPRwf_0497 (142 aa).

Belongs to the UPF0102 family.

The chain is UPF0102 protein PsycPRwf_0497 from Psychrobacter sp. (strain PRwf-1).